A 155-amino-acid polypeptide reads, in one-letter code: Small ribosomal subunit protein uS7 (155 aa).

It belongs to the universal ribosomal protein uS7 family. Part of the 30S ribosomal subunit. Contacts proteins S9 and S11.

One of the primary rRNA binding proteins, it binds directly to 16S rRNA where it nucleates assembly of the head domain of the 30S subunit. Is located at the subunit interface close to the decoding center, probably blocks exit of the E-site tRNA. This chain is Small ribosomal subunit protein uS7, found in Kosmotoga olearia (strain ATCC BAA-1733 / DSM 21960 / TBF 19.5.1).